A 391-amino-acid polypeptide reads, in one-letter code: 3-ketoacyl-CoA thiolase (391 aa).

Cys95 functions as the Acyl-thioester intermediate in the catalytic mechanism. Catalysis depends on proton acceptor residues His347 and Cys377.

This sequence belongs to the thiolase-like superfamily. Thiolase family. In terms of assembly, heterotetramer of two alpha chains (FadB) and two beta chains (FadA).

The protein localises to the cytoplasm. The catalysed reaction is an acyl-CoA + acetyl-CoA = a 3-oxoacyl-CoA + CoA. It participates in lipid metabolism; fatty acid beta-oxidation. Functionally, catalyzes the final step of fatty acid oxidation in which acetyl-CoA is released and the CoA ester of a fatty acid two carbons shorter is formed. This Stutzerimonas stutzeri (strain A1501) (Pseudomonas stutzeri) protein is 3-ketoacyl-CoA thiolase.